Reading from the N-terminus, the 155-residue chain is Altered inheritance rate of mitochondria protein 29 (155 aa).

Position 78 is a phosphoserine (Ser78).

It belongs to the UPF0538 family.

The protein localises to the cytoplasm. In terms of biological role, may be involved in mitochondrial organization and biogenesis. The chain is Altered inheritance rate of mitochondria protein 29 (AIM29) from Saccharomyces cerevisiae (strain ATCC 204508 / S288c) (Baker's yeast).